The chain runs to 38 residues: Large ribosomal subunit protein bL36 (38 aa).

It belongs to the bacterial ribosomal protein bL36 family.

The polypeptide is Large ribosomal subunit protein bL36 (Thermotoga maritima (strain ATCC 43589 / DSM 3109 / JCM 10099 / NBRC 100826 / MSB8)).